Here is a 513-residue protein sequence, read N- to C-terminus: Serine/threonine-protein kinase pakH (513 aa).

The region spanning 42–294 (FEIQEKLGEG…PSQLLDHPFI (253 aa)) is the Protein kinase domain. Residues 48–56 (LGEGSFGSV) and lysine 71 contribute to the ATP site. Catalysis depends on aspartate 163, which acts as the Proton acceptor. The disordered stretch occupies residues 313–358 (KSKKRKSIGPSVSPKQQPNDNNNNNNNNKPQFLSKLLNNNSNSSND). The span at 331–357 (NDNNNNNNNNKPQFLSKLLNNNSNSSN) shows a compositional bias: low complexity. A helical transmembrane segment spans residues 493–512 (IVLYSTLGLILVLSVFFKFF).

The protein belongs to the protein kinase superfamily. STE Ser/Thr protein kinase family. STE20 subfamily. It depends on Mg(2+) as a cofactor.

Its subcellular location is the membrane. It catalyses the reaction L-seryl-[protein] + ATP = O-phospho-L-seryl-[protein] + ADP + H(+). It carries out the reaction L-threonyl-[protein] + ATP = O-phospho-L-threonyl-[protein] + ADP + H(+). This chain is Serine/threonine-protein kinase pakH (pakH-1), found in Dictyostelium discoideum (Social amoeba).